Consider the following 531-residue polypeptide: 2,3-bisphosphoglycerate-independent phosphoglycerate mutase (531 aa).

Positions 13 and 63 each coordinate Mn(2+). The active-site Phosphoserine intermediate is serine 63. Substrate contacts are provided by residues histidine 124, 154-155 (RD), arginine 187, arginine 193, 261-264 (RPDR), and lysine 342. Residues aspartate 420, histidine 424, aspartate 462, histidine 463, and histidine 480 each contribute to the Mn(2+) site.

It belongs to the BPG-independent phosphoglycerate mutase family. In terms of assembly, monomer. The cofactor is Mn(2+).

It carries out the reaction (2R)-2-phosphoglycerate = (2R)-3-phosphoglycerate. It functions in the pathway carbohydrate degradation; glycolysis; pyruvate from D-glyceraldehyde 3-phosphate: step 3/5. In terms of biological role, catalyzes the interconversion of 2-phosphoglycerate and 3-phosphoglycerate. This Mycoplasma capricolum subsp. capricolum (strain California kid / ATCC 27343 / NCTC 10154) protein is 2,3-bisphosphoglycerate-independent phosphoglycerate mutase.